We begin with the raw amino-acid sequence, 135 residues long: uncharacterized protein (135 aa).

Residues Leu-4–Thr-24 traverse the membrane as a helical segment.

Its subcellular location is the membrane. This is an uncharacterized protein from Methanocaldococcus jannaschii (strain ATCC 43067 / DSM 2661 / JAL-1 / JCM 10045 / NBRC 100440) (Methanococcus jannaschii).